Consider the following 284-residue polypeptide: GPN-loop GTPase 3 (284 aa).

Position 13–18 (13–18 (GSGKST)) interacts with GTP. Positions 72 to 74 (GPN) match the Gly-Pro-Asn (GPN)-loop; involved in dimer interface motif. GTP is bound at residue 174–177 (TKMD).

This sequence belongs to the GPN-loop GTPase family. Heterodimer with GPN1. Binds to RNA polymerase II (RNAPII). Interacts directly with subunits RPB4 and RPB7 and the CTD of RPB1.

Small GTPase required for proper localization of RNA polymerase II (RNAPII). May act at an RNAP assembly step prior to nuclear import. This chain is GPN-loop GTPase 3, found in Homo sapiens (Human).